The primary structure comprises 924 residues: Bifunctional glutamine synthetase adenylyltransferase/adenylyl-removing enzyme (924 aa).

Residues 1-422 (MQTKGCRFFM…QFKKLIQEEV (422 aa)) form an adenylyl removase region. Residues 424-924 (SPDETDTELE…PASTMALESE (501 aa)) form an adenylyl transferase region.

Belongs to the GlnE family. Mg(2+) is required as a cofactor.

It catalyses the reaction [glutamine synthetase]-O(4)-(5'-adenylyl)-L-tyrosine + phosphate = [glutamine synthetase]-L-tyrosine + ADP. The catalysed reaction is [glutamine synthetase]-L-tyrosine + ATP = [glutamine synthetase]-O(4)-(5'-adenylyl)-L-tyrosine + diphosphate. In terms of biological role, involved in the regulation of glutamine synthetase GlnA, a key enzyme in the process to assimilate ammonia. When cellular nitrogen levels are high, the C-terminal adenylyl transferase (AT) inactivates GlnA by covalent transfer of an adenylyl group from ATP to specific tyrosine residue of GlnA, thus reducing its activity. Conversely, when nitrogen levels are low, the N-terminal adenylyl removase (AR) activates GlnA by removing the adenylyl group by phosphorolysis, increasing its activity. The regulatory region of GlnE binds the signal transduction protein PII (GlnB) which indicates the nitrogen status of the cell. In Acinetobacter baylyi (strain ATCC 33305 / BD413 / ADP1), this protein is Bifunctional glutamine synthetase adenylyltransferase/adenylyl-removing enzyme.